A 436-amino-acid polypeptide reads, in one-letter code: Anaerobic glycerol-3-phosphate dehydrogenase subunit B (436 aa).

Belongs to the anaerobic G-3-P dehydrogenase subunit B family. Composed of a catalytic GlpA/B dimer and of membrane bound GlpC. It depends on FMN as a cofactor.

It catalyses the reaction a quinone + sn-glycerol 3-phosphate = dihydroxyacetone phosphate + a quinol. The protein operates within polyol metabolism; glycerol degradation via glycerol kinase pathway; glycerone phosphate from sn-glycerol 3-phosphate (anaerobic route): step 1/1. Conversion of glycerol 3-phosphate to dihydroxyacetone. Uses fumarate or nitrate as electron acceptor. The protein is Anaerobic glycerol-3-phosphate dehydrogenase subunit B of Vibrio cholerae serotype O1 (strain ATCC 39315 / El Tor Inaba N16961).